A 427-amino-acid chain; its full sequence is A-adding tRNA nucleotidyltransferase (427 aa).

49–52 (GTVR) contacts ATP. Positions 62 and 64 each coordinate Mg(2+). ATP contacts are provided by residues 136–137 (RD), Asn141, 181–190 (DPTRLLRGVR), Arg194, and Arg225.

This sequence belongs to the tRNA nucleotidyltransferase/poly(A) polymerase family. Mg(2+) serves as cofactor.

It carries out the reaction a tRNA with a 3' CC end + ATP = a tRNA with a 3' CCA end + diphosphate. Its function is as follows. tRNA nucleotidyltransferase involved in the synthesis of the tRNA CCA terminus. Adds the terminal adenosine residue to tRNA. In Halalkalibacterium halodurans (strain ATCC BAA-125 / DSM 18197 / FERM 7344 / JCM 9153 / C-125) (Bacillus halodurans), this protein is A-adding tRNA nucleotidyltransferase.